The primary structure comprises 342 residues: Probable tyrosine--tRNA ligase, cytoplasmic (342 aa).

Position 48 (Y48) interacts with L-tyrosine. The 'HIGH' region signature appears at 53 to 61 (ITGKPHIGY). L-tyrosine contacts are provided by Y175, Q179, D182, and Q197. Residues 231–235 (KMSSS) carry the 'KMSKS' region motif.

Belongs to the class-I aminoacyl-tRNA synthetase family. As to quaternary structure, homodimer.

The protein resides in the cytoplasm. It carries out the reaction tRNA(Tyr) + L-tyrosine + ATP = L-tyrosyl-tRNA(Tyr) + AMP + diphosphate + H(+). This chain is Probable tyrosine--tRNA ligase, cytoplasmic, found in Enterocytozoon bieneusi (strain H348) (Microsporidian parasite).